A 97-amino-acid polypeptide reads, in one-letter code: MPQAINLKDLPQAKLKDLLEFPCAFTFKVVGIHREDLVEDVVAITQVHAKGDCNPRQQRSSKGTYNSVSIDIIAEHIDQIETLYLELAKITGVRMVL.

The protein belongs to the UPF0250 family.

This chain is UPF0250 protein HD_2015, found in Haemophilus ducreyi (strain 35000HP / ATCC 700724).